A 263-amino-acid polypeptide reads, in one-letter code: 3-methyl-2-oxobutanoate hydroxymethyltransferase (263 aa).

The Mg(2+) site is built by Asp45 and Asp84. 3-methyl-2-oxobutanoate-binding positions include 45 to 46 (DS), Asp84, and Lys112. Residue Glu114 coordinates Mg(2+). Glu181 acts as the Proton acceptor in catalysis.

This sequence belongs to the PanB family. In terms of assembly, homodecamer; pentamer of dimers. Mg(2+) is required as a cofactor.

It is found in the cytoplasm. The catalysed reaction is 3-methyl-2-oxobutanoate + (6R)-5,10-methylene-5,6,7,8-tetrahydrofolate + H2O = 2-dehydropantoate + (6S)-5,6,7,8-tetrahydrofolate. Its pathway is cofactor biosynthesis; (R)-pantothenate biosynthesis; (R)-pantoate from 3-methyl-2-oxobutanoate: step 1/2. Functionally, catalyzes the reversible reaction in which hydroxymethyl group from 5,10-methylenetetrahydrofolate is transferred onto alpha-ketoisovalerate to form ketopantoate. This Chromohalobacter salexigens (strain ATCC BAA-138 / DSM 3043 / CIP 106854 / NCIMB 13768 / 1H11) protein is 3-methyl-2-oxobutanoate hydroxymethyltransferase.